The following is a 114-amino-acid chain: NADH-quinone oxidoreductase subunit K 2 (114 aa).

The next 3 membrane-spanning stretches (helical) occupy residues 1–21, 29–49, and 62–82; these read MIVP…LGVF, LIMI…AFIG, and FVLF…AIIV.

The protein belongs to the complex I subunit 4L family. In terms of assembly, NDH-1 is composed of 14 different subunits. Subunits NuoA, H, J, K, L, M, N constitute the membrane sector of the complex.

The protein localises to the cell inner membrane. It carries out the reaction a quinone + NADH + 5 H(+)(in) = a quinol + NAD(+) + 4 H(+)(out). Functionally, NDH-1 shuttles electrons from NADH, via FMN and iron-sulfur (Fe-S) centers, to quinones in the respiratory chain. The immediate electron acceptor for the enzyme in this species is believed to be ubiquinone. Couples the redox reaction to proton translocation (for every two electrons transferred, four hydrogen ions are translocated across the cytoplasmic membrane), and thus conserves the redox energy in a proton gradient. This Syntrophobacter fumaroxidans (strain DSM 10017 / MPOB) protein is NADH-quinone oxidoreductase subunit K 2.